Consider the following 331-residue polypeptide: Glycine betaine/proline betaine-binding periplasmic protein (331 aa).

A signal peptide spans 1–21 (MRHTVIFASAFATLVTASAFA). Substrate-binding positions include W86, H90, and 161 to 163 (WGC). An intrachain disulfide couples C157 to C163.

As to quaternary structure, the complex is composed of two ATP-binding proteins (ProV), two transmembrane proteins (ProW) and a solute-binding protein (ProX).

The protein localises to the periplasm. In terms of biological role, part of the ProU ABC transporter complex involved in glycine betaine and proline betaine uptake. Binds glycine betaine and proline betaine with high affinity. This Salmonella typhimurium (strain LT2 / SGSC1412 / ATCC 700720) protein is Glycine betaine/proline betaine-binding periplasmic protein (proX).